A 117-amino-acid chain; its full sequence is uncharacterized protein (117 aa).

Polar residues predominate over residues 1–19 (MTSNPSSSADQPLSGTTVP). A disordered region spans residues 1 to 28 (MTSNPSSSADQPLSGTTVPGSVPGKAPE). Helical transmembrane passes span 38–58 (AAVW…LIFI) and 76–96 (LPLG…TVFA).

Its subcellular location is the cell membrane. This is an uncharacterized protein from Mycobacterium tuberculosis (strain ATCC 25618 / H37Rv).